Reading from the N-terminus, the 63-residue chain is Large ribosomal subunit protein uL30 (63 aa).

This sequence belongs to the universal ribosomal protein uL30 family. Part of the 50S ribosomal subunit.

The polypeptide is Large ribosomal subunit protein uL30 (Xanthomonas campestris pv. campestris (strain 8004)).